The chain runs to 278 residues: Elongation factor Ts (278 aa).

Positions 80 to 83 (TDFV) are involved in Mg(2+) ion dislocation from EF-Tu.

It belongs to the EF-Ts family.

The protein resides in the cytoplasm. In terms of biological role, associates with the EF-Tu.GDP complex and induces the exchange of GDP to GTP. It remains bound to the aminoacyl-tRNA.EF-Tu.GTP complex up to the GTP hydrolysis stage on the ribosome. In Pseudarthrobacter chlorophenolicus (strain ATCC 700700 / DSM 12829 / CIP 107037 / JCM 12360 / KCTC 9906 / NCIMB 13794 / A6) (Arthrobacter chlorophenolicus), this protein is Elongation factor Ts.